The chain runs to 277 residues: Zinc finger protein 511 (277 aa).

3 C2H2-type zinc fingers span residues 96-121 (FRCHIAGCKQLFDTLEGYEHHYNALH), 123-146 (NVCSNCKRSFPSNRLLEIHILEWH), and 160-185 (YECLVEGCGLKFKTSKERKDHLIRTH). The segment at 225 to 244 (ESSESMDFSLTPEPVETEPM) is disordered.

It belongs to the krueppel C2H2-type zinc-finger protein family.

It localises to the nucleus. Its function is as follows. May be involved in transcriptional regulation. This chain is Zinc finger protein 511 (znf511), found in Danio rerio (Zebrafish).